A 276-amino-acid chain; its full sequence is Aliphatic sulfonates import ATP-binding protein SsuB 1 (276 aa).

Positions 1–21 are disordered; the sequence is MSTGNVTTLRRPEAPPSLPAG. The 221-residue stretch at 39-259 folds into the ABC transporter domain; the sequence is FSFRNVTKSF…RHGTPEFARL (221 aa). 71 to 78 contributes to the ATP binding site; that stretch reads GKSGCGKS.

The protein belongs to the ABC transporter superfamily. Aliphatic sulfonates importer (TC 3.A.1.17.2) family. As to quaternary structure, the complex is composed of two ATP-binding proteins (SsuB), two transmembrane proteins (SsuC) and a solute-binding protein (SsuA).

The protein localises to the cell inner membrane. It carries out the reaction ATP + H2O + aliphatic sulfonate-[sulfonate-binding protein]Side 1 = ADP + phosphate + aliphatic sulfonateSide 2 + [sulfonate-binding protein]Side 1.. Its function is as follows. Part of the ABC transporter complex SsuABC involved in aliphatic sulfonates import. Responsible for energy coupling to the transport system. The sequence is that of Aliphatic sulfonates import ATP-binding protein SsuB 1 from Agrobacterium fabrum (strain C58 / ATCC 33970) (Agrobacterium tumefaciens (strain C58)).